The sequence spans 187 residues: Large ribosomal subunit protein uL5 (187 aa).

It belongs to the universal ribosomal protein uL5 family. In terms of assembly, part of the 50S ribosomal subunit; part of the 5S rRNA/L5/L18/L25 subcomplex. Contacts the 5S rRNA and the P site tRNA. Forms a bridge to the 30S subunit in the 70S ribosome.

This is one of the proteins that bind and probably mediate the attachment of the 5S RNA into the large ribosomal subunit, where it forms part of the central protuberance. In the 70S ribosome it contacts protein S13 of the 30S subunit (bridge B1b), connecting the 2 subunits; this bridge is implicated in subunit movement. Contacts the P site tRNA; the 5S rRNA and some of its associated proteins might help stabilize positioning of ribosome-bound tRNAs. The chain is Large ribosomal subunit protein uL5 from Mycolicibacterium smegmatis (strain ATCC 700084 / mc(2)155) (Mycobacterium smegmatis).